Reading from the N-terminus, the 147-residue chain is MSEELQPVFSIERLYVKDLSLEVPHAPQIFLEQGEPEVDMRVSTGSQKLEDGYYNVDVTVTVTAKLDNERTMFLNEVTQSGIFRLENIPEEDADLLLGVACPNILFPYAREAVSGTVTRAGFPPVLLAPINFEAIYQQQQEAEAAGA.

It belongs to the SecB family. In terms of assembly, homotetramer, a dimer of dimers. One homotetramer interacts with 1 SecA dimer.

The protein resides in the cytoplasm. In terms of biological role, one of the proteins required for the normal export of preproteins out of the cell cytoplasm. It is a molecular chaperone that binds to a subset of precursor proteins, maintaining them in a translocation-competent state. It also specifically binds to its receptor SecA. The sequence is that of Protein-export protein SecB from Neisseria meningitidis serogroup A / serotype 4A (strain DSM 15465 / Z2491).